A 167-amino-acid polypeptide reads, in one-letter code: Small ribosomal subunit protein uS3m (167 aa).

Residues methionine 1–phenylalanine 35 constitute a mitochondrion transit peptide.

It belongs to the universal ribosomal protein uS3 family. Component of the mitochondrial ribosome small subunit (28S) which comprises a 12S rRNA and about 30 distinct proteins.

It localises to the mitochondrion. The sequence is that of Small ribosomal subunit protein uS3m (MRPS24) from Bos taurus (Bovine).